A 904-amino-acid polypeptide reads, in one-letter code: METLLHAKLLLSAEVESLKSGSFDQTYVKKAEHIISGESYQLVQQFVDKFKGKISISGEISTSSVIAALNDFLNVEVFKMGQENEMLFLAIALLQTFIQNNYTGPAARLKAISGLFGKTGIEIGAVNTALSRSLAIMGQPAYEFMDDPLYLVLSLLLLERITGQKSLFDVTPDQEIPLPIISAESTPGLLAVAYWWWARALLTQLSLIPEPSGFQASVASAIYQSADLAYAITKELPESIHEDFKRELCAMYYLENVKCSLAINTEHLCLPSLTRAKKITNFEFVMTGARATRTKYQQKAHAGLIILAKSFTFQNFALRTTSATPETFALESDLLLEKPHFESIADEPLDEQIYSKRQKVDLNEGYEEDKLLPLALRQENIPKLLLDLNPNDQPTLSDYDNIQLLLRLYTIKNTTPAKDPLVEEELTALLSRILYQNGDKNWSIFARSLWERSIIETTKAKTIERGLLQMQSLVEELDLKIKSKLVPSSSEINVASRLSYIHQLPFIPRWQLDATLAEKYMSLGILKSAVEIYERLGMACETALCYAAVGDEKKAEEILLQRINENDSDARAYSILGDIKQDPSLWEKSWEIGKYVNAKNSLAKYYFNPPPKSGAQPNYSATLKHLNDSLRQYPLSFETWYFYGCVGLQCGKMQIAAEAFTRCVSLDPYHALSWSNLSAAYTKMDKLKEAYSCLKRAISCDAQKNWKIWENYMLVAVKLNEWEDVLTACKQLVSIRRDKSGEGSIDLPIIEKLVELLVTSEYPEEPQQLSYFQKSCTEFICNTLPQVITTSARCWRLVARVELWRKRPWAALECHEKAYRAISHNPDLEVEEKVWNDTVDACEDLVAAYESLGEMEGKYGPGSLVCKDWKYKCRSTIKALMSKGKGRWDDSPGWDRLVEARSQI.

6 TPR repeats span residues 510 to 544 (WQLDATLAEKYMSLGILKSAVEIYERLGMACETAL), 563 to 596 (INENDSDARAYSILGDIKQDPSLWEKSWEIGKYV), 603 to 636 (AKYYFNPPPKSGAQPNYSATLKHLNDSLRQYPLS), 637 to 670 (FETWYFYGCVGLQCGKMQIAAEAFTRCVSLDPYH), 671 to 704 (ALSWSNLSAAYTKMDKLKEAYSCLKRAISCDAQK), and 706 to 739 (WKIWENYMLVAVKLNEWEDVLTACKQLVSIRRDK).

The protein belongs to the TTC27 family.

The protein localises to the cytoplasm. It is found in the nucleus. Required for the maintenance of the cell wall integrity. This chain is Essential for maintenance of the cell wall protein 1 (EMW1), found in Saccharomyces cerevisiae (strain ATCC 204508 / S288c) (Baker's yeast).